We begin with the raw amino-acid sequence, 797 residues long: Leucine-rich repeat-containing protein AAC1 (797 aa).

Basic and acidic residues predominate over residues 1–12; the sequence is MKRTSNRNEEAT. Disordered regions lie at residues 1-20, 51-103, 125-148, and 307-333; these read MKRTSNRNEEATAKLSSSTT, YSLF…TTTT, NLPTTETETTTITPTLTTTTTTTT, and HSTSVPSSPPPPPPPPPPQIQQPTITA. The span at 55 to 81 shows a compositional bias: polar residues; that stretch reads NEPNNDNDTNSSTRPNKQQKLLKSNES. Over residues 82–103 the composition is skewed to low complexity; sequence TTSTTTTTTPITTTTTTTTTTT. The segment covering 313–326 has biased composition (pro residues); sequence SSPPPPPPPPPPQI. LRR repeat units lie at residues 376–397, 406–425, 435–456, 464–484, 492–513, 514–535, 543–564, 572–593, 601–622, and 633–653; these read KLKKINLKNIGLDSRDKFDFFS, TLETLIICDNIGDEGMQLLS, VLKRLELQKNQFTNQSAYYLNK, QLETLNLSSNRIDEQGLIMMK, SLKEFIFSKNRLGNTDSVDFGK, SITSLDLHDSMVGSKQSIKGLS, SITSLNLSFNHIGSNEAIKSLS, TLKFVDLSFNKINSNFGLDHLV, SIHSISLQSNQIDNTSAITLSQ, and PFKYLNLSGNKIGIGGLKKLI.

This Dictyostelium discoideum (Social amoeba) protein is Leucine-rich repeat-containing protein AAC1 (AAC1).